A 311-amino-acid chain; its full sequence is Probable cell division protein WhiA (311 aa).

Residues 277–311 (TLKEVADQIPDGPISKSGVNHRFKKLHEIAESLRE) constitute a DNA-binding region (H-T-H motif).

Belongs to the WhiA family.

Its function is as follows. Involved in cell division and chromosome segregation. The chain is Probable cell division protein WhiA from Lactobacillus acidophilus (strain ATCC 700396 / NCK56 / N2 / NCFM).